Here is a 209-residue protein sequence, read N- to C-terminus: HTH-type transcriptional repressor BepR (209 aa).

Positions 9-69 constitute an HTH tetR-type domain; it reads AETREAILLA…SIIGRARFPQ (61 aa). The segment at residues 32–51 is a DNA-binding region (H-T-H motif); sequence TLTEIACYAGVTRGAIYFHF.

Represses expression of bepDE. In Brucella suis biovar 1 (strain 1330), this protein is HTH-type transcriptional repressor BepR (bepR).